Here is a 249-residue protein sequence, read N- to C-terminus: Transcriptional activator protein EsaR (249 aa).

The HTH luxR-type domain occupies 174–239 (QSADKTIFSS…QAIRLGVELD (66 aa)). The segment at residues 198-217 (YAEIAAITGISVSTVKFHIK) is a DNA-binding region (H-T-H motif).

This sequence belongs to the autoinducer-regulated transcriptional regulatory protein family.

Functionally, functions as a potential OhlL-responsive transcriptional regulator. This Pantoea stewartii subsp. stewartii (Erwinia stewartii) protein is Transcriptional activator protein EsaR (esaR).